A 451-amino-acid chain; its full sequence is Tubulin alpha-1 chain (451 aa).

Gln-11 is a binding site for GTP. Lys-40 carries the N6-acetyllysine modification. 5 residues coordinate GTP: Glu-71, Thr-145, Thr-179, Asn-206, and Asn-228. Glu-71 is a Mg(2+) binding site. Residue Glu-254 is part of the active site. Residues 429–451 are disordered; the sequence is EKDYEEVGAESGEGEEGDEGEEY. The segment covering 431-451 has biased composition (acidic residues); it reads DYEEVGAESGEGEEGDEGEEY.

Belongs to the tubulin family. Dimer of alpha and beta chains. A typical microtubule is a hollow water-filled tube with an outer diameter of 25 nm and an inner diameter of 15 nM. Alpha-beta heterodimers associate head-to-tail to form protofilaments running lengthwise along the microtubule wall with the beta-tubulin subunit facing the microtubule plus end conferring a structural polarity. Microtubules usually have 13 protofilaments but different protofilament numbers can be found in some organisms and specialized cells. Requires Mg(2+) as cofactor. Undergoes a tyrosination/detyrosination cycle, the cyclic removal and re-addition of a C-terminal tyrosine residue by the enzymes tubulin tyrosine carboxypeptidase (TTCP) and tubulin tyrosine ligase (TTL), respectively. Post-translationally, acetylation of alpha chains at Lys-40 stabilizes microtubules and affects affinity and processivity of microtubule motors. This modification has a role in multiple cellular functions, ranging from cell motility, cell cycle progression or cell differentiation to intracellular trafficking and signaling.

It localises to the cytoplasm. It is found in the cytoskeleton. The catalysed reaction is GTP + H2O = GDP + phosphate + H(+). Tubulin is the major constituent of microtubules, a cylinder consisting of laterally associated linear protofilaments composed of alpha- and beta-tubulin heterodimers. Microtubules grow by the addition of GTP-tubulin dimers to the microtubule end, where a stabilizing cap forms. Below the cap, tubulin dimers are in GDP-bound state, owing to GTPase activity of alpha-tubulin. This chain is Tubulin alpha-1 chain (TUBA1), found in Anemia phyllitidis (Fern).